The primary structure comprises 761 residues: Protein transport protein SEC23 C (761 aa).

C60, C63, C82, and C85 together coordinate Zn(2+). The zinc finger-like stretch occupies residues 60–85 (CRTCRSVLNPYSVVDFSACNWGCPFC).

It belongs to the SEC23/SEC24 family. SEC24 subfamily. In terms of assembly, component of the coat protein complex II (COPII), composed of at least five proteins: the Sec23/24 complex, the Sec13/31 complex and Sar1.

It localises to the cytoplasmic vesicle. Its subcellular location is the COPII-coated vesicle membrane. The protein localises to the endoplasmic reticulum membrane. It is found in the membrane. In terms of biological role, component of the coat protein complex II (COPII) which promotes the formation of transport vesicles from the endoplasmic reticulum (ER). The coat has two main functions, the physical deformation of the endoplasmic reticulum membrane into vesicles and the selection of cargo molecules. This is Protein transport protein SEC23 C from Arabidopsis thaliana (Mouse-ear cress).